Consider the following 136-residue polypeptide: uncharacterized protein (136 aa).

The protein localises to the mitochondrion. This is an uncharacterized protein from Arabidopsis thaliana (Mouse-ear cress).